The chain runs to 316 residues: Transaldolase (316 aa).

The active-site Schiff-base intermediate with substrate is the lysine 127.

The protein belongs to the transaldolase family. Type 2 subfamily.

It is found in the cytoplasm. The catalysed reaction is D-sedoheptulose 7-phosphate + D-glyceraldehyde 3-phosphate = D-erythrose 4-phosphate + beta-D-fructose 6-phosphate. The protein operates within carbohydrate degradation; pentose phosphate pathway; D-glyceraldehyde 3-phosphate and beta-D-fructose 6-phosphate from D-ribose 5-phosphate and D-xylulose 5-phosphate (non-oxidative stage): step 2/3. Its function is as follows. Transaldolase is important for the balance of metabolites in the pentose-phosphate pathway. The sequence is that of Transaldolase (tal) from Helicobacter pylori (strain ATCC 700392 / 26695) (Campylobacter pylori).